We begin with the raw amino-acid sequence, 20 residues long: Cytochrome c oxidase subunit 6A2, mitochondrial (20 aa).

Residues 1–20 form a disordered region; sequence ASGAKGDHGGAGASTXXLLT.

It belongs to the cytochrome c oxidase subunit 6A family. Component of the cytochrome c oxidase (complex IV, CIV), a multisubunit enzyme composed of 14 subunits. The complex is composed of a catalytic core of 3 subunits MT-CO1, MT-CO2 and MT-CO3, encoded in the mitochondrial DNA, and 11 supernumerary subunits COX4I, COX5A, COX5B, COX6A, COX6B, COX6C, COX7A, COX7B, COX7C, COX8 and NDUFA4, which are encoded in the nuclear genome. The complex exists as a monomer or a dimer and forms supercomplexes (SCs) in the inner mitochondrial membrane with NADH-ubiquinone oxidoreductase (complex I, CI) and ubiquinol-cytochrome c oxidoreductase (cytochrome b-c1 complex, complex III, CIII), resulting in different assemblies (supercomplex SCI(1)III(2)IV(1) and megacomplex MCI(2)III(2)IV(2)). In terms of tissue distribution, heart specific isoform.

It is found in the mitochondrion inner membrane. It participates in energy metabolism; oxidative phosphorylation. Component of the cytochrome c oxidase, the last enzyme in the mitochondrial electron transport chain which drives oxidative phosphorylation. The respiratory chain contains 3 multisubunit complexes succinate dehydrogenase (complex II, CII), ubiquinol-cytochrome c oxidoreductase (cytochrome b-c1 complex, complex III, CIII) and cytochrome c oxidase (complex IV, CIV), that cooperate to transfer electrons derived from NADH and succinate to molecular oxygen, creating an electrochemical gradient over the inner membrane that drives transmembrane transport and the ATP synthase. Cytochrome c oxidase is the component of the respiratory chain that catalyzes the reduction of oxygen to water. Electrons originating from reduced cytochrome c in the intermembrane space (IMS) are transferred via the dinuclear copper A center (CU(A)) of subunit 2 and heme A of subunit 1 to the active site in subunit 1, a binuclear center (BNC) formed by heme A3 and copper B (CU(B)). The BNC reduces molecular oxygen to 2 water molecules unsing 4 electrons from cytochrome c in the IMS and 4 protons from the mitochondrial matrix. Plays a role in the assembly and stabilization of complex IV. The sequence is that of Cytochrome c oxidase subunit 6A2, mitochondrial (COX6A2) from Canis lupus familiaris (Dog).